A 108-amino-acid polypeptide reads, in one-letter code: ATP-dependent Clp protease adapter protein ClpS (108 aa).

The protein belongs to the ClpS family. In terms of assembly, binds to the N-terminal domain of the chaperone ClpA.

In terms of biological role, involved in the modulation of the specificity of the ClpAP-mediated ATP-dependent protein degradation. This chain is ATP-dependent Clp protease adapter protein ClpS, found in Ralstonia pickettii (strain 12J).